We begin with the raw amino-acid sequence, 242 residues long: Small ribosomal subunit protein uS2 (242 aa).

It belongs to the universal ribosomal protein uS2 family.

In Colwellia psychrerythraea (strain 34H / ATCC BAA-681) (Vibrio psychroerythus), this protein is Small ribosomal subunit protein uS2.